Reading from the N-terminus, the 364-residue chain is Geranylfarnesyl diphosphate synthase, chloroplastic (364 aa).

A chloroplast-targeting transit peptide spans 1–51 (MSHCTIFLYKYFPGKPRYQHCSFLHPLNHKLKSLFLPITGSRFLSNSTFSV). Lysine 72, lysine 111, and histidine 143 together coordinate isopentenyl diphosphate. 2 residues coordinate Mg(2+): aspartate 150 and aspartate 156. Residue arginine 161 participates in dimethylallyl diphosphate binding. Position 162 (arginine 162) interacts with isopentenyl diphosphate. Lysine 249, threonine 250, glutamine 287, aspartate 294, lysine 304, and lysine 314 together coordinate dimethylallyl diphosphate.

This sequence belongs to the FPP/GGPP synthase family. As to quaternary structure, monomer. Mg(2+) serves as cofactor. Strongly expressed in glandular trichomes, and, at low levels, in leaves, stems and flowers.

It is found in the plastid. Its subcellular location is the chloroplast. The catalysed reaction is isopentenyl diphosphate + (2E,6E,10E)-geranylgeranyl diphosphate = (2E,6E,10E,14E)-geranylfarnesyl diphosphate + diphosphate. It catalyses the reaction 2 isopentenyl diphosphate + (2E,6E)-farnesyl diphosphate = (2E,6E,10E,14E)-geranylfarnesyl diphosphate + 2 diphosphate. It carries out the reaction 3 isopentenyl diphosphate + (2E)-geranyl diphosphate = (2E,6E,10E,14E)-geranylfarnesyl diphosphate + 3 diphosphate. The enzyme catalyses 4 isopentenyl diphosphate + dimethylallyl diphosphate = (2E,6E,10E,14E)-geranylfarnesyl diphosphate + 4 diphosphate. The protein operates within secondary metabolite biosynthesis; terpenoid biosynthesis. It participates in isoprenoid biosynthesis. Its function is as follows. Involved in the biosynthesis of leucosceptrane sesterterpenoids natural products, which are playing defensive roles toward herbivorus insects (e.g. Spodoptera exigua). Catalyzes the condensation of isopentenyl pyrophosphate (IDP) with the allylic pyrophosphates to yield geranylfarnesyl diphosphate (GFDP), the C(25) prenyl diphosphate precursor to all sesterterpenoids. Geranylgeranyl diphosphate (GGPP) is the preferred substrate, however dimethylallyl diphosphate (DMADP), farnesyl diphosphate (FDP) and geranyl diphosphate (GDP) can also be used as allylic substrate. This is Geranylfarnesyl diphosphate synthase, chloroplastic from Leucosceptrum canum (Hairy white-wand).